Here is a 142-residue protein sequence, read N- to C-terminus: Universal stress protein C (142 aa).

The protein belongs to the universal stress protein A family.

Its subcellular location is the cytoplasm. In terms of biological role, required for resistance to DNA-damaging agents. The sequence is that of Universal stress protein C (uspC) from Escherichia coli (strain K12).